A 468-amino-acid chain; its full sequence is Putative magnesium transporter MRS2-G (468 aa).

2 disordered regions span residues 1–76 (MGRR…AGKV) and 182–205 (NGQP…VPRL). Composition is skewed to low complexity over residues 14-23 (ASNASTSSST) and 31-45 (RLPS…SSPS). Over residues 46 to 67 (PASPSPPPPSASHPAPPSPPLA) the composition is skewed to pro residues. The segment covering 187-197 (GDDHGEKHDDS) has biased composition (basic and acidic residues). The next 2 membrane-spanning stretches (helical) occupy residues 402–422 (LTLT…GAFA) and 437–457 (FFWP…IVLL).

The protein belongs to the CorA metal ion transporter (MIT) (TC 1.A.35.5) family.

The protein resides in the membrane. Its function is as follows. Putative magnesium transporter. This chain is Putative magnesium transporter MRS2-G (MRS2-G), found in Oryza sativa subsp. indica (Rice).